Reading from the N-terminus, the 813-residue chain is Calpain-7 (813 aa).

Met1 bears the N-acetylmethionine mark. Thr95 carries the phosphothreonine modification. The region spanning 232–540 (RERFAYPMPF…YDVIYLSWNP (309 aa)) is the Calpain catalytic domain. Residues Cys290, His458, and Asn478 contribute to the active site. Residues 541–701 (GLLKESTCIH…INGKWSGQSA (161 aa)) form a domain III region. The tract at residues 702–813 (GGCGNFQETH…VIPIKTTQLQ (112 aa)) is domain N.

The protein belongs to the peptidase C2 family.

The protein localises to the nucleus. In terms of biological role, calcium-regulated non-lysosomal thiol-protease. This Sus scrofa (Pig) protein is Calpain-7 (CAPN7).